We begin with the raw amino-acid sequence, 109 residues long: Serine protease inhibitor (109 aa).

A signal peptide spans 1–28; that stretch reads MKMKLLQVHFVLLVSSSFLLGYTGMVTA. 5 disulfides stabilise this stretch: Cys43/Cys83, Cys52/Cys79, Cys58/Cys73, Cys62/Cys104, and Cys85/Cys98. A TIL domain is found at 43 to 104; that stretch reads CRENEIFSQC…QGVCILENSC (62 aa).

Belongs to the serine protease inhibitor-like (TIL domain-containing) family. As to expression, ubiquitously expressed (at protein level), including in venom glands. Found more precisely in the epidermis, fat body, gut, muscle, and venom of worker bees.

Its subcellular location is the secreted. Dual role peptide that functions as a broad-spectrum antimicrobial peptide and antifibrinolytic toxin. Inhibits trypsin (IC(50)=375 nM), plasmin (IC(50)=2140 nM), and microbial serine proteases (subtilisin A (IC(50)=294 nM) and proteinase K (IC(50)=459 nM)). Exhibits antifibrinolytic activity by binding and inhibiting plasmin. Does not inhibit chymotrypsin, elastase or thrombin. Binds to microbial cell wall carbohydrates (LPS, mannan and N-acetyl-D-glucosamine) and shows antimicrobial activity (MIC=4.1 uM against B.thuringiensis, MIC=4.95 uM against E.coli, MIC=9.6 uM against the fungus B.bassiana). Does not show hemolytic activity. The chain is Serine protease inhibitor from Bombus ignitus (Bumblebee).